The primary structure comprises 580 residues: MNIRTILVEKAIAAMTTVGLPADTNPAVTQSTRPQFGDYQINAAMGAAKKMKSNPRELAQKIIDNLDVSDIAEKTEIAGPGFINIHLKPEFLAQSVKAANSDAKLAVNEHANPQKVVVDYSSPNLAKEMHVGHLRSTIIGDAIVRALEFRGDSVVRQNHMGDWGTQFGMLIAHLEDQISQGVDLDTVALADLETFYRDAKKRFDDEEGFADKARNYVVKLQGGDAHCEKLWKLFIATSVKHSEEVYKRLNVTLTQADIMAESAYNAELNDIISLLKDKNIAVESQGAQVVFLDELANKDGEPSAFIVQKSGGGFLYATTDLAACDYRSNKLGADRILIFVDARQSLHFNQVELTARKAGFLRDETSYEFCPFGTMMGADNKPFKTRTGGTVKLADLLEESINRAAIKLAERESDLSEQERSEIARKVGIGAVKYADLSKHRTSDYIFNWDSMLSFEGATAPYLQYAYTRIRSIFRKSGVDAATLNSNVTIVEPQEKALALKLLQLEEVLDLMITEATPHVLCGYLYELASLYMTFYEACPVLKEGVEPNVRDSRLVLCNLVSKTLETGLDLLGIEVMEQM.

A 'HIGH' region motif is present at residues 123 to 133 (PNLAKEMHVGH).

This sequence belongs to the class-I aminoacyl-tRNA synthetase family. As to quaternary structure, monomer.

The protein localises to the cytoplasm. The enzyme catalyses tRNA(Arg) + L-arginine + ATP = L-arginyl-tRNA(Arg) + AMP + diphosphate. This Pseudoalteromonas translucida (strain TAC 125) protein is Arginine--tRNA ligase.